The primary structure comprises 444 residues: Tubulin beta chain (444 aa).

An MREI motif motif is present at residues 1-4; sequence MREI. Glutamine 11 provides a ligand contact to GTP. A Phosphoserine modification is found at serine 40. The residue at position 55 (threonine 55) is a Phosphothreonine. The residue at position 58 (lysine 58) is an N6-acetyllysine; alternate. Lysine 58 is subject to N6-succinyllysine; alternate. Lysine 58 participates in a covalent cross-link: Glycyl lysine isopeptide (Lys-Gly) (interchain with G-Cter in ubiquitin); alternate. Residues glutamate 69, serine 138, glycine 142, threonine 143, and glycine 144 each coordinate GTP. Glutamate 69 contributes to the Mg(2+) binding site. At serine 172 the chain carries Phosphoserine; by CDK1. The GTP site is built by asparagine 204 and asparagine 226. Phosphothreonine occurs at positions 285 and 290. An Omega-N-methylarginine modification is found at arginine 318. Residue lysine 324 forms a Glycyl lysine isopeptide (Lys-Gly) (interchain with G-Cter in ubiquitin) linkage. Positions 423–444 are disordered; sequence QQYQDATAEEEEDFGEEAEEEA. A compositionally biased stretch (acidic residues) spans 429-444; that stretch reads TAEEEEDFGEEAEEEA. 4 positions are modified to 5-glutamyl polyglutamate: glutamate 434, glutamate 438, glutamate 439, and glutamate 441. 5-glutamyl glycine is present on residues glutamate 438, glutamate 439, glutamate 441, glutamate 442, and glutamate 443.

The protein belongs to the tubulin family. In terms of assembly, heterodimer of alpha and beta chains. A typical microtubule is a hollow water-filled tube with an outer diameter of 25 nm and an inner diameter of 15 nM. Alpha-beta heterodimers associate head-to-tail to form protofilaments running lengthwise along the microtubule wall with the beta-tubulin subunit facing the microtubule plus end conferring a structural polarity. Microtubules usually have 13 protofilaments but different protofilament numbers can be found in some organisms and specialized cells. Interacts with CIMAP3. Interacts with DIAPH1. Interacts with MX1. May interact with RNABP10. Interacts with CFAP157. Nascent tubulin polypeptide interacts (via beta-tubulin MREI motif) with TTC5/STRAP; this interaction results in tubulin mRNA-targeted degradation. It depends on Mg(2+) as a cofactor. In terms of processing, some glutamate residues at the C-terminus are polyglycylated, resulting in polyglycine chains on the gamma-carboxyl group. Glycylation is mainly limited to tubulin incorporated into axonemes (cilia and flagella) whereas glutamylation is prevalent in neuronal cells, centrioles, axonemes, and the mitotic spindle. Both modifications can coexist on the same protein on adjacent residues, and lowering polyglycylation levels increases polyglutamylation, and reciprocally. Cilia and flagella glycylation is required for their stability and maintenance. Flagella glycylation controls sperm motility. Some glutamate residues at the C-terminus are polyglutamylated, resulting in polyglutamate chains on the gamma-carboxyl group. Polyglutamylation plays a key role in microtubule severing by spastin (SPAST). SPAST preferentially recognizes and acts on microtubules decorated with short polyglutamate tails: severing activity by SPAST increases as the number of glutamates per tubulin rises from one to eight, but decreases beyond this glutamylation threshold. Glutamylation is also involved in cilia motility. Post-translationally, phosphorylated on Ser-172 by CDK1 during the cell cycle, from metaphase to telophase, but not in interphase. This phosphorylation inhibits tubulin incorporation into microtubules.

The protein resides in the cytoplasm. It localises to the cytoskeleton. Tubulin is the major constituent of microtubules, a cylinder consisting of laterally associated linear protofilaments composed of alpha- and beta-tubulin heterodimers. Microtubules grow by the addition of GTP-tubulin dimers to the microtubule end, where a stabilizing cap forms. Below the cap, tubulin dimers are in GDP-bound state, owing to GTPase activity of alpha-tubulin. This chain is Tubulin beta chain (TUBB), found in Sus scrofa (Pig).